We begin with the raw amino-acid sequence, 886 residues long: Alanine--tRNA ligase (886 aa).

Positions 564, 568, 676, and 680 each coordinate Zn(2+).

Belongs to the class-II aminoacyl-tRNA synthetase family. Zn(2+) serves as cofactor.

The protein resides in the cytoplasm. It catalyses the reaction tRNA(Ala) + L-alanine + ATP = L-alanyl-tRNA(Ala) + AMP + diphosphate. In terms of biological role, catalyzes the attachment of alanine to tRNA(Ala) in a two-step reaction: alanine is first activated by ATP to form Ala-AMP and then transferred to the acceptor end of tRNA(Ala). Also edits incorrectly charged Ser-tRNA(Ala) and Gly-tRNA(Ala) via its editing domain. In Methylobacterium sp. (strain 4-46), this protein is Alanine--tRNA ligase.